Consider the following 307-residue polypeptide: HPr kinase/phosphorylase (307 aa).

Catalysis depends on residues His136 and Lys157. 151–158 (GESGIGKS) serves as a coordination point for ATP. Position 158 (Ser158) interacts with Mg(2+). The active-site Proton acceptor; for phosphorylation activity. Proton donor; for dephosphorylation activity is the Asp175. Residues 198-207 (LEVRGMGIID) are important for the catalytic mechanism of both phosphorylation and dephosphorylation. Glu199 serves as a coordination point for Mg(2+). Arg240 is an active-site residue. The segment at 261-266 (PIRPGR) is important for the catalytic mechanism of dephosphorylation.

The protein belongs to the HPrK/P family. As to quaternary structure, homohexamer. Mg(2+) is required as a cofactor.

The enzyme catalyses [HPr protein]-L-serine + ATP = [HPr protein]-O-phospho-L-serine + ADP + H(+). The catalysed reaction is [HPr protein]-O-phospho-L-serine + phosphate + H(+) = [HPr protein]-L-serine + diphosphate. Its function is as follows. Catalyzes the ATP- as well as the pyrophosphate-dependent phosphorylation of a specific serine residue in HPr, a phosphocarrier protein of the phosphoenolpyruvate-dependent sugar phosphotransferase system (PTS). HprK/P also catalyzes the pyrophosphate-producing, inorganic phosphate-dependent dephosphorylation (phosphorolysis) of seryl-phosphorylated HPr (P-Ser-HPr). The two antagonistic activities of HprK/P are regulated by several intracellular metabolites, which change their concentration in response to the absence or presence of rapidly metabolisable carbon sources (glucose, fructose, etc.) in the growth medium. Therefore, by controlling the phosphorylation state of HPr, HPrK/P is a sensor enzyme that plays a major role in the regulation of carbon metabolism and sugar transport: it mediates carbon catabolite repression (CCR), and regulates PTS-catalyzed carbohydrate uptake and inducer exclusion. The polypeptide is HPr kinase/phosphorylase (Clostridium perfringens (strain 13 / Type A)).